The primary structure comprises 174 residues: Pituitary tumor-transforming gene 1 protein-interacting protein (174 aa).

Residues 1–29 form the signal peptide; that stretch reads MASAVLGLTLRWVMFLSAVLLLLLPGASA. At 30 to 93 the chain is on the extracellular side; that stretch reads QEPPGVGCSE…RWGVCWVNFE (64 aa). The PSI domain maps to 36 to 89; sequence GCSEYTNRSCEECLRNVSCLWCNENKACLDYPVRKILPPASLCKLSSARWGVCW. N42 and N51 each carry an N-linked (GlcNAc...) asparagine glycan. A helical transmembrane segment spans residues 94 to 114; sequence ALIITMSVLGGSVLLGITVCC. Over 115-174 the chain is Cytoplasmic; the sequence is CCCCRRKRSRKPDKSDERAMREQEERRVRQEERRAEMKSRHDEIRKKYGLFKEQNPYEKF. Positions 126–155 are disordered; the sequence is PDKSDERAMREQEERRVRQEERRAEMKSRH. A coiled-coil region spans residues 127–163; it reads DKSDERAMREQEERRVRQEERRAEMKSRHDEIRKKYG. Y171 is subject to Phosphotyrosine.

Interacts with PTTG1.

It localises to the cell membrane. It is found in the cytoplasm. The protein resides in the nucleus. In terms of biological role, may facilitate PTTG1 nuclear translocation. This is Pituitary tumor-transforming gene 1 protein-interacting protein (Pttg1ip) from Rattus norvegicus (Rat).